Reading from the N-terminus, the 382-residue chain is Quinolinate synthase (382 aa).

Histidine 63 and serine 84 together coordinate iminosuccinate. Cysteine 129 contributes to the [4Fe-4S] cluster binding site. Iminosuccinate is bound by residues 155–157 (YAN) and serine 172. Residue cysteine 216 participates in [4Fe-4S] cluster binding. Residues 242 to 244 (HPE) and threonine 259 contribute to the iminosuccinate site. Cysteine 313 is a binding site for [4Fe-4S] cluster.

Belongs to the quinolinate synthase family. Type 1 subfamily. It depends on [4Fe-4S] cluster as a cofactor.

The protein localises to the cytoplasm. It carries out the reaction iminosuccinate + dihydroxyacetone phosphate = quinolinate + phosphate + 2 H2O + H(+). It functions in the pathway cofactor biosynthesis; NAD(+) biosynthesis; quinolinate from iminoaspartate: step 1/1. Its function is as follows. Catalyzes the condensation of iminoaspartate with dihydroxyacetone phosphate to form quinolinate. This is Quinolinate synthase from Ralstonia pickettii (strain 12J).